Here is a 387-residue protein sequence, read N- to C-terminus: Acetate kinase (387 aa).

Asn-14 contributes to the Mg(2+) binding site. Lys-21 lines the ATP pocket. Residue Arg-80 participates in substrate binding. The active-site Proton donor/acceptor is the Asp-137. ATP-binding positions include His-197 to Gly-201, Asp-271 to Arg-273, and Gly-319 to Asn-323. Glu-373 lines the Mg(2+) pocket.

This sequence belongs to the acetokinase family. Homodimer. The cofactor is Mg(2+). Mn(2+) serves as cofactor.

It is found in the cytoplasm. The catalysed reaction is acetate + ATP = acetyl phosphate + ADP. The protein operates within metabolic intermediate biosynthesis; acetyl-CoA biosynthesis; acetyl-CoA from acetate: step 1/2. Functionally, catalyzes the formation of acetyl phosphate from acetate and ATP. Can also catalyze the reverse reaction. This Mycobacterium avium (strain 104) protein is Acetate kinase.